A 339-amino-acid chain; its full sequence is D-erythrose-4-phosphate dehydrogenase (339 aa).

11–12 is a binding site for NAD(+); sequence RI. Residues 158 to 160, arginine 204, 217 to 218, and arginine 240 contribute to the substrate site; these read SCT and TK. Residue cysteine 159 is the Nucleophile of the active site. Asparagine 322 is an NAD(+) binding site.

It belongs to the glyceraldehyde-3-phosphate dehydrogenase family. Epd subfamily. As to quaternary structure, homotetramer.

It localises to the cytoplasm. It catalyses the reaction D-erythrose 4-phosphate + NAD(+) + H2O = 4-phospho-D-erythronate + NADH + 2 H(+). It participates in cofactor biosynthesis; pyridoxine 5'-phosphate biosynthesis; pyridoxine 5'-phosphate from D-erythrose 4-phosphate: step 1/5. Its function is as follows. Catalyzes the NAD-dependent conversion of D-erythrose 4-phosphate to 4-phosphoerythronate. In Aliivibrio fischeri (strain ATCC 700601 / ES114) (Vibrio fischeri), this protein is D-erythrose-4-phosphate dehydrogenase.